Here is a 1024-residue protein sequence, read N- to C-terminus: Translation initiation factor IF-2 (1024 aa).

The interval 33-425 is disordered; sequence SHMSSLEDDT…GRVKKTKTMK (393 aa). 4 stretches are compositionally biased toward basic and acidic residues: residues 43–62, 135–148, 167–198, and 223–263; these read EARV…DTRV, TPED…ELKP, TPAK…KETS, and SKPD…KEVR. A compositionally biased stretch (polar residues) spans 316–325; that stretch reads EATQAPTSPQ. Residues 332–350 show a composition bias toward basic and acidic residues; that stretch reads KPADKGPARAQAHRPDTGR. Residues 365-375 show a composition bias toward basic residues; sequence RSKKKEWKKKG. Residues 394 to 406 are compositionally biased toward basic and acidic residues; sequence SVVEGKDLYEKGR. Residues 407–423 are compositionally biased toward basic residues; sequence SGKKGRRKDGRVKKTKT. A tr-type G domain is found at 518–687; the sequence is SRPPVVTIMG…LLQSEVLELK (170 aa). The segment at 527-534 is G1; sequence GHVDHGKT. Residue 527-534 coordinates GTP; it reads GHVDHGKT. The tract at residues 552 to 556 is G2; sequence GITQH. A G3 region spans residues 573–576; that stretch reads DTPG. GTP-binding positions include 573-577 and 627-630; these read DTPGH and NKMD. A G4 region spans residues 627–630; sequence NKMD. Residues 663-665 are G5; that stretch reads SAK.

This sequence belongs to the TRAFAC class translation factor GTPase superfamily. Classic translation factor GTPase family. IF-2 subfamily.

Its subcellular location is the cytoplasm. One of the essential components for the initiation of protein synthesis. Protects formylmethionyl-tRNA from spontaneous hydrolysis and promotes its binding to the 30S ribosomal subunits. Also involved in the hydrolysis of GTP during the formation of the 70S ribosomal complex. The polypeptide is Translation initiation factor IF-2 (Desulforapulum autotrophicum (strain ATCC 43914 / DSM 3382 / VKM B-1955 / HRM2) (Desulfobacterium autotrophicum)).